Reading from the N-terminus, the 257-residue chain is Large ribosomal subunit protein uL3 (257 aa).

Gln-151 is subject to N5-methylglutamine. The tract at residues 218–257 is disordered; the sequence is YPASIKSAANTNTAPADAPVETPAEEAVVDTAATDGAQES. Positions 225–236 are enriched in low complexity; sequence AANTNTAPADAP.

This sequence belongs to the universal ribosomal protein uL3 family. As to quaternary structure, part of the 50S ribosomal subunit. Forms a cluster with proteins L14 and L19. Methylated by PrmB.

Functionally, one of the primary rRNA binding proteins, it binds directly near the 3'-end of the 23S rRNA, where it nucleates assembly of the 50S subunit. The polypeptide is Large ribosomal subunit protein uL3 (Sphingopyxis alaskensis (strain DSM 13593 / LMG 18877 / RB2256) (Sphingomonas alaskensis)).